The following is a 702-amino-acid chain: MEDPFEEADQPTTEPGMVLDSVEAGDTTPPTKRKSKFSGFGKIFKPWKWRKKKSSDKFKETSEVLERKISMRKPREELVKRGVLLEDPEQGGEDPGKPSDAMLKNGHTTPIGNARSSSPVQVEEEPVRLASLRKAIPEEDLKKRLGSTGSQPNSEAESVPENVPKPPLLPPKRPLSSSHEASEGQAKDATSSGGTARFIISTSITTAPAATTAATSLAKTVNLSVTPSPAPRTLPAAPASTNTTATPSLTHMVPAKQPPIPPPKPAHRNSNPVIAELSQAINSGTLLSKPSPPLPPKRGIPSTSVPTLESAAAITTKTPSDEREKSTCSMGSELLPMISPRSPSPPLPTHIPPEPPRTPPFPAKTFQVVPEIEFPPSLDLHQEIPQQEDQKKEVPKRILDQNFGEPHIPSRLPPLPLHIRIQQALTSPLPMTPILEGSHRAHSLLFENSDSFSEDSSTLGRTRSLPITIEMLKVPDDEEEEEQTCPSTFSEEMTPTSVIPKLPQCLREEEEKESDSDSEGPIQYRDEEDEDESYQSALANKVKRKDTLAMKLNHRPSEPELNLNSWPCKSKEEWNEIRHQIGNTLIRRLSQRPTPEELEQRNILQPKNEADRQAEKREIKRRLTRKLSQRPTVAELLARKILRFNEYVEVTDAQDYDRRADKPWTKLTPADKAAIRKELNEFKSSEMEVHEESKHFTRYHRP.

Disordered stretches follow at residues M1–F37, R72–G194, and N222–A363. Residues E63–P88 form an RPEL 1 repeat. Residues R72 to L84 are compositionally biased toward basic and acidic residues. The span at G106–V120 shows a compositional bias: polar residues. Phosphoserine occurs at positions 116, 118, 131, and 147. Positions S147–A156 are enriched in polar residues. Positions V163 to R173 are enriched in pro residues. Residues T233 to T250 show a composition bias toward low complexity. Phosphoserine is present on residues S270 and S291. Over residues P301 to T318 the composition is skewed to polar residues. Residues S342 and S344 each carry the phosphoserine modification. A compositionally biased stretch (pro residues) spans S342–P362. Phosphothreonine is present on T358. S427 carries the phosphoserine modification. Position 432 is a phosphothreonine (T432). A phosphoserine mark is found at S443, S453, and S464. The interval I469–S536 is disordered. The span at T484–S497 shows a compositional bias: polar residues. The segment covering E508 to S518 has biased composition (acidic residues). A phosphoserine mark is found at S514, S516, S557, and S590. 2 RPEL repeats span residues N583–N608 and R621–E646. Residues R592–E615 are disordered. The residue at position 628 (S628) is a Phosphoserine.

The protein belongs to the phosphatase and actin regulator family. As to quaternary structure, binds PPP1CA and actin.

Its subcellular location is the cytoplasm. The protein localises to the cell projection. It localises to the lamellipodium. Functionally, regulator of protein phosphatase 1 (PP1) required for neural tube and optic fissure closure, and enteric neural crest cell (ENCCs) migration during development. Acts as an activator of PP1 by interacting with PPP1CA and preventing phosphorylation of PPP1CA at 'Thr-320'. During neural tube closure, localizes to the ventral neural tube and activates PP1, leading to down-regulate cell proliferation within cranial neural tissue and the neural retina. Also acts as a regulator of migration of enteric neural crest cells (ENCCs) by activating PP1, leading to dephosphorylation and subsequent activation of cofilin (COF1 or COF2) and repression of the integrin signaling through the RHO/ROCK pathway. The chain is Phosphatase and actin regulator 4 (PHACTR4) from Homo sapiens (Human).